The primary structure comprises 314 residues: Olfactory receptor 9A4 (314 aa).

Over 1-24 (MLMNYSSATEFYLLGFPGSEELHH) the chain is Extracellular. Asparagine 4 carries N-linked (GlcNAc...) asparagine glycosylation. A helical transmembrane segment spans residues 25–45 (ILFAIFFFFYLVTLMGNTVII). The Cytoplasmic segment spans residues 46–53 (MIVCVDKR). Residues 54–74 (LQSPMYFFLGHLSALEILVTT) traverse the membrane as a helical segment. At 75–99 (IIVPVMLWGLLLPGMQTIYLSACVV) the chain is on the extracellular side. Cysteine 97 and cysteine 189 are oxidised to a cystine. The chain crosses the membrane as a helical span at residues 100–120 (QLFLYLAVGTTEFALLGAMAV). The Cytoplasmic segment spans residues 121-139 (DRYVAVCNPLRYNIIMNRH). The helical transmembrane segment at 140-160 (TCNFVVLVSWVFGFLFQIWPV) threads the bilayer. Residues 161-197 (YVMFQLTYCKSNVVNNFFCDRGQLLKLSCNNTLFTEF) are Extracellular-facing. The N-linked (GlcNAc...) asparagine glycan is linked to asparagine 190. Residues 198-217 (ILFLMAVFVLFGSLIPTIVS) form a helical membrane-spanning segment. Over 218-237 (NAYIISTILKIPSSSGRRKS) the chain is Cytoplasmic. The helical transmembrane segment at 238–258 (FSTCASHFTCVVIGYGSCLFL) threads the bilayer. At 259–271 (YVKPKQTQAADYN) the chain is on the extracellular side. The chain crosses the membrane as a helical span at residues 272-292 (WVVSLMVSVVTPFLNPFIFTL). Topologically, residues 293 to 314 (RNDKVIEALRDGVKRCCQLFRN) are cytoplasmic.

It belongs to the G-protein coupled receptor 1 family.

The protein resides in the cell membrane. Its function is as follows. Odorant receptor. In Homo sapiens (Human), this protein is Olfactory receptor 9A4 (OR9A4).